Here is a 479-residue protein sequence, read N- to C-terminus: NADH-quinone oxidoreductase subunit N 2 (479 aa).

14 helical membrane passes run 9 to 29 (WALA…LLIV), 40 to 60 (LLLW…LMLA), 75 to 95 (RFAV…FFLS), 110 to 130 (YVLL…IDLL), 131 to 151 (SIYV…GFLR), 164 to 184 (VILG…IYGL), 206 to 226 (LLLA…AVPF), 238 to 258 (PTTI…AVIL), 272 to 292 (WIIV…VALV), 299 to 319 (LLAY…VAGG), 326 to 346 (VMLY…AVIM), 371 to 391 (ALLM…AGFF), 404 to 424 (GFVA…YFYI), and 449 to 469 (ATLA…AWFL).

Belongs to the complex I subunit 2 family. NDH-1 is composed of 14 different subunits. Subunits NuoA, H, J, K, L, M, N constitute the membrane sector of the complex.

It localises to the cell inner membrane. The enzyme catalyses a quinone + NADH + 5 H(+)(in) = a quinol + NAD(+) + 4 H(+)(out). Functionally, NDH-1 shuttles electrons from NADH, via FMN and iron-sulfur (Fe-S) centers, to quinones in the respiratory chain. The immediate electron acceptor for the enzyme in this species is believed to be ubiquinone. Couples the redox reaction to proton translocation (for every two electrons transferred, four hydrogen ions are translocated across the cytoplasmic membrane), and thus conserves the redox energy in a proton gradient. The sequence is that of NADH-quinone oxidoreductase subunit N 2 from Rhizobium meliloti (strain 1021) (Ensifer meliloti).